A 258-amino-acid chain; its full sequence is Small ribosomal subunit protein uS2 (258 aa).

Residues 226–258 (QGVSNEEVAAEQNIDLDEKEKSEETEATEATEE) are disordered.

The protein belongs to the universal ribosomal protein uS2 family.

This is Small ribosomal subunit protein uS2 from Staphylococcus aureus (strain COL).